The chain runs to 265 residues: uncharacterized protein (265 aa).

His-7, His-9, Glu-94, His-130, His-155, and Asp-205 together coordinate a divalent metal cation.

The protein belongs to the metallo-dependent hydrolases superfamily. TatD-type hydrolase family. Requires a divalent metal cation as cofactor.

This is an uncharacterized protein from Escherichia coli O157:H7.